Here is a 492-residue protein sequence, read N- to C-terminus: Tyrosinase-like protein 1 (492 aa).

A signal peptide spans 1–22 (MDKMRTLQSLIVKLTLLYGALC). The Cu cation site is built by His-147, His-155, His-164, His-289, His-293, and His-316. Residues 472-492 (SEPPLQLEGPSFTSSFDDPRI) form a disordered region. Over residues 482-492 (SFTSSFDDPRI) the composition is skewed to polar residues.

Cu(2+) is required as a cofactor. As to expression, prismatic layer of shell (at protein level). Expressed primarily in the mantle with highest level in the mantle edge and lower level in the mantle pallium.

The protein resides in the secreted. In Margaritifera margaritifera (Freshwater pearl mussel), this protein is Tyrosinase-like protein 1.